The following is a 157-amino-acid chain: Homeobox protein DBX2 (157 aa).

The homeobox DNA-binding region spans Gly-9–Lys-68. The tract at residues Ser-105 to Asp-157 is disordered. Positions Pro-118–Pro-139 are enriched in polar residues.

Belongs to the H2.0 homeobox family. In terms of tissue distribution, localized to the central nervous system during embryogenesis. It is found restricted to the rostro-caudal and dorso-ventral regions of the hindbrain. In the ventricular zone of the spinal cord, it localizes to the dorsal part of the basal plate. In the adult, it is detected in ovary.

The protein resides in the nucleus. Appears to perform a very early function in establishing the identity of a subset of cells that originate in the region of the ventricular zone in the developing spinal cord and in the hindbrain. The chain is Homeobox protein DBX2 (DBX2) from Gallus gallus (Chicken).